An 80-amino-acid polypeptide reads, in one-letter code: Trefoil factor 3 (80 aa).

The signal sequence occupies residues 1-23; sequence MEARVLWLLVVVLVLGSSSLAVA. Positions 30–73 constitute a P-type domain; it reads NLCEVPPKDRVDCGYPEITSEQCVNRGCCFDSSIHGVPWCFKPL. Intrachain disulfides connect C32–C58, C42–C57, and C52–C69.

Monomer. Homodimer; disulfide-linked.

The protein resides in the secreted. It is found in the extracellular space. The protein localises to the extracellular matrix. Its subcellular location is the cytoplasm. Involved in the maintenance and repair of the intestinal mucosa. Promotes the mobility of epithelial cells in healing processes (motogen). This Canis lupus familiaris (Dog) protein is Trefoil factor 3 (TFF3).